Reading from the N-terminus, the 460-residue chain is Cysteine--tRNA ligase (460 aa).

Cysteine 27 provides a ligand contact to Zn(2+). The 'HIGH' region signature appears at 29-39; the sequence is PTVYDLIHVGN. Residues cysteine 207, histidine 232, and glutamate 236 each coordinate Zn(2+). The 'KMSKS' region motif lies at 264 to 268; sequence KMSKS. Lysine 267 contacts ATP.

This sequence belongs to the class-I aminoacyl-tRNA synthetase family. As to quaternary structure, monomer. It depends on Zn(2+) as a cofactor.

It localises to the cytoplasm. The enzyme catalyses tRNA(Cys) + L-cysteine + ATP = L-cysteinyl-tRNA(Cys) + AMP + diphosphate. This is Cysteine--tRNA ligase from Thermotoga petrophila (strain ATCC BAA-488 / DSM 13995 / JCM 10881 / RKU-1).